Here is a 140-residue protein sequence, read N- to C-terminus: Large ribosomal subunit protein uL16c (140 aa).

The protein belongs to the universal ribosomal protein uL16 family. In terms of assembly, part of the 50S ribosomal subunit.

Its subcellular location is the plastid. It is found in the chloroplast. This is Large ribosomal subunit protein uL16c from Cyanidium caldarium (Red alga).